The following is a 210-amino-acid chain: Probable septum site-determining protein MinC (210 aa).

It belongs to the MinC family. Interacts with MinD and FtsZ.

Functionally, cell division inhibitor that blocks the formation of polar Z ring septums. Rapidly oscillates between the poles of the cell to destabilize FtsZ filaments that have formed before they mature into polar Z rings. Prevents FtsZ polymerization. The polypeptide is Probable septum site-determining protein MinC (Thermotoga neapolitana (strain ATCC 49049 / DSM 4359 / NBRC 107923 / NS-E)).